Reading from the N-terminus, the 657-residue chain is C4-dicarboxylate transport sensor protein DctS (657 aa).

Residues 1–26 lie on the Cytoplasmic side of the membrane; the sequence is MRDTTGGPAGAEVWTVPGLLGARKLD. A helical transmembrane segment spans residues 27 to 51; that stretch reads LLALIPLVAIVALMTLVGALLFAVA. The Periplasmic portion of the chain corresponds to 52–252; it reads QSDANRARAK…AYDAPDAFGN (201 aa). Residues 253–273 traverse the membrane as a helical segment; sequence AALLAAIGALSVFAVLAMVVL. The Cytoplasmic portion of the chain corresponds to 274-657; it reads HRNALRRRMA…LPVPQEGAPA (384 aa). In terms of domain architecture, PAS spans 289-361; it reads AEMAFRRAME…ARQRQLIEGQ (73 aa). In terms of domain architecture, PAC spans 365–417; sequence QAFETRFRRSDGSEIEVQVFEAPLIDAGGRHRGWMGSVIDITQAKQAARLARA. The tract at residues 407–422 is inter-domain linker; the sequence is QAKQAARLARAQDESL. The 216-residue stretch at 437 to 652 folds into the Histidine kinase domain; sequence TLAHELNQPL…VFTVTLPVPQ (216 aa). His440 is modified (phosphohistidine; by autocatalysis).

It is found in the cell inner membrane. It catalyses the reaction ATP + protein L-histidine = ADP + protein N-phospho-L-histidine.. Its function is as follows. Member of the two-component regulatory system DctS/DctR involved in the transport of C4-dicarboxylates. DctS functions as a membrane-associated protein kinase that phosphorylates DctR in response to environmental signals. The protein is C4-dicarboxylate transport sensor protein DctS (dctS) of Rhodobacter capsulatus (Rhodopseudomonas capsulata).